We begin with the raw amino-acid sequence, 785 residues long: Phenylalanine--tRNA ligase beta subunit (785 aa).

The region spanning 39–147 (FPIPRGVVFA…DALPPGTPLA (109 aa)) is the tRNA-binding domain. In terms of domain architecture, B5 spans 399–474 (KPPEAIPFRP…RIQGYETIPL (76 aa)). The Mg(2+) site is built by Asp452, Asp458, Glu461, and Glu462. Residues 688–780 (SRHPAAFRDL…ALRARGFGLR (93 aa)) form the FDX-ACB domain.

It belongs to the phenylalanyl-tRNA synthetase beta subunit family. Type 1 subfamily. Tetramer of two alpha and two beta subunits. Mg(2+) serves as cofactor.

It localises to the cytoplasm. The enzyme catalyses tRNA(Phe) + L-phenylalanine + ATP = L-phenylalanyl-tRNA(Phe) + AMP + diphosphate + H(+). This is Phenylalanine--tRNA ligase beta subunit from Thermus thermophilus (strain ATCC BAA-163 / DSM 7039 / HB27).